Here is a 242-residue protein sequence, read N- to C-terminus: Adenosylcobinamide-GDP ribazoletransferase (242 aa).

Helical transmembrane passes span 31–51, 52–72, 109–129, 134–154, and 188–208; these read LLFYPVVGVLFGVLLWALSTA, LMGAPLLLHAALLLTAWVLLS, IAVVTLGLVLLLKFTALVALI, GAALILAPLIGRASMLALFLT, and ILIGGFSGGVAVLLAAICFIG.

Belongs to the CobS family. Mg(2+) is required as a cofactor.

The protein resides in the cell inner membrane. The catalysed reaction is alpha-ribazole + adenosylcob(III)inamide-GDP = adenosylcob(III)alamin + GMP + H(+). It catalyses the reaction alpha-ribazole 5'-phosphate + adenosylcob(III)inamide-GDP = adenosylcob(III)alamin 5'-phosphate + GMP + H(+). The protein operates within cofactor biosynthesis; adenosylcobalamin biosynthesis; adenosylcobalamin from cob(II)yrinate a,c-diamide: step 7/7. Its function is as follows. Joins adenosylcobinamide-GDP and alpha-ribazole to generate adenosylcobalamin (Ado-cobalamin). Also synthesizes adenosylcobalamin 5'-phosphate from adenosylcobinamide-GDP and alpha-ribazole 5'-phosphate. The chain is Adenosylcobinamide-GDP ribazoletransferase from Pseudomonas fluorescens (strain SBW25).